Here is a 326-residue protein sequence, read N- to C-terminus: Protein BugT (326 aa).

The first 25 residues, 1–25 (MNMTRLLAVIGIFIATAGIAAPVSA), serve as a signal peptide directing secretion.

This sequence belongs to the UPF0065 (bug) family.

The protein localises to the periplasm. The polypeptide is Protein BugT (bugT) (Bordetella pertussis (strain Tohama I / ATCC BAA-589 / NCTC 13251)).